A 364-amino-acid polypeptide reads, in one-letter code: Peptide chain release factor 2 (364 aa).

An N5-methylglutamine modification is found at Q252.

It belongs to the prokaryotic/mitochondrial release factor family. In terms of processing, methylated by PrmC. Methylation increases the termination efficiency of RF2.

It localises to the cytoplasm. Functionally, peptide chain release factor 2 directs the termination of translation in response to the peptide chain termination codons UGA and UAA. The polypeptide is Peptide chain release factor 2 (Clostridium perfringens (strain SM101 / Type A)).